The following is a 467-amino-acid chain: Coiled-coil domain-containing protein 71 (467 aa).

The tract at residues 81–105 (PSQTKLQARAPNPTATSPPASAPRT) is disordered. The segment covering 88-105 (ARAPNPTATSPPASAPRT) has biased composition (low complexity). A Phosphoserine modification is found at Ser129. 2 disordered regions span residues 211-280 (KLRK…GTKT) and 349-416 (VRAK…KAWL). The segment covering 253-265 (GHQSKTNRATGSP) has biased composition (polar residues). Positions 279–359 (KTAQAKVART…RAKAKVARTQ (81 aa)) form a coiled coil. The span at 349–380 (VRAKAKVARTQPRGRGRPKGSAKARTTRKGQK) shows a compositional bias: basic residues. Over residues 392–401 (RAEEAKDLPP) the composition is skewed to basic and acidic residues.

This Homo sapiens (Human) protein is Coiled-coil domain-containing protein 71 (CCDC71).